The chain runs to 429 residues: Glutamate-1-semialdehyde 2,1-aminomutase (429 aa).

Residue Lys-265 is modified to N6-(pyridoxal phosphate)lysine.

Belongs to the class-III pyridoxal-phosphate-dependent aminotransferase family. HemL subfamily. As to quaternary structure, homodimer. Pyridoxal 5'-phosphate serves as cofactor.

It localises to the cytoplasm. It catalyses the reaction (S)-4-amino-5-oxopentanoate = 5-aminolevulinate. It functions in the pathway porphyrin-containing compound metabolism; protoporphyrin-IX biosynthesis; 5-aminolevulinate from L-glutamyl-tRNA(Glu): step 2/2. The sequence is that of Glutamate-1-semialdehyde 2,1-aminomutase from Chromohalobacter salexigens (strain ATCC BAA-138 / DSM 3043 / CIP 106854 / NCIMB 13768 / 1H11).